A 145-amino-acid chain; its full sequence is Small ribosomal subunit protein eS19 (145 aa).

The residue at position 23 (K23) is an N6-acetyllysine. R67 bears the Omega-N-methylarginine mark. An N6-acetyllysine mark is found at K111 and K115. N6-succinyllysine is present on K143.

The protein belongs to the eukaryotic ribosomal protein eS19 family. As to quaternary structure, component of the small ribosomal subunit. Part of the small subunit (SSU) processome, composed of more than 70 proteins and the RNA chaperone small nucleolar RNA (snoRNA) U3. Interacts with RPS19BP1; the interaction is direct and mediates the integration of RPS19 in state post-A1. Interacts with RPS19BP1.

Its subcellular location is the cytoplasm. It localises to the nucleus. It is found in the nucleolus. Component of the small ribosomal subunit. The ribosome is a large ribonucleoprotein complex responsible for the synthesis of proteins in the cell. Required for pre-rRNA processing and maturation of 40S ribosomal subunits. Part of the small subunit (SSU) processome, first precursor of the small eukaryotic ribosomal subunit. During the assembly of the SSU processome in the nucleolus, many ribosome biogenesis factors, an RNA chaperone and ribosomal proteins associate with the nascent pre-rRNA and work in concert to generate RNA folding, modifications, rearrangements and cleavage as well as targeted degradation of pre-ribosomal RNA by the RNA exosome. The protein is Small ribosomal subunit protein eS19 (RPS19) of Oryctolagus cuniculus (Rabbit).